Reading from the N-terminus, the 493-residue chain is 3-octaprenyl-4-hydroxybenzoate carboxy-lyase (493 aa).

N172 is a binding site for Mn(2+). Prenylated FMN-binding positions include 175-177 (IYR), 189-191 (RWL), and 194-195 (RG). E238 is a binding site for Mn(2+). The active-site Proton donor is D287.

Belongs to the UbiD family. As to quaternary structure, homohexamer. The cofactor is prenylated FMN. Requires Mn(2+) as cofactor.

It is found in the cell membrane. It catalyses the reaction a 4-hydroxy-3-(all-trans-polyprenyl)benzoate + H(+) = a 2-(all-trans-polyprenyl)phenol + CO2. Its pathway is cofactor biosynthesis; ubiquinone biosynthesis. Functionally, catalyzes the decarboxylation of 3-octaprenyl-4-hydroxy benzoate to 2-octaprenylphenol, an intermediate step in ubiquinone biosynthesis. The protein is 3-octaprenyl-4-hydroxybenzoate carboxy-lyase of Shewanella amazonensis (strain ATCC BAA-1098 / SB2B).